Reading from the N-terminus, the 711-residue chain is Origin recognition complex subunit 3 (711 aa).

S23 and S516 each carry phosphoserine.

The protein belongs to the ORC3 family. In terms of assembly, component of ORC, a complex composed of at least 6 subunits: ORC1, ORC2, ORC3, ORC4, ORC5 and ORC6. ORC is regulated in a cell-cycle dependent manner. It is sequentially assembled at the exit from anaphase of mitosis and disassembled as cells enter S phase. Post-translationally, multi-mono-ubiquitinated by OBI1; ubiquitination is important for efficient DNA replication origin site activation. Ubiquitination levels are low in mitotic and early G1-phAse cells and are induced in late G1-/early S-phase, peaking in S-phase and decrease toward the end of the cell cycle.

The protein resides in the nucleus. The protein localises to the chromosome. Functionally, component of the origin recognition complex (ORC) that binds origins of replication. DNA-binding is ATP-dependent. The specific DNA sequences that define origins of replication have not been identified yet. ORC is required to assemble the pre-replication complex necessary to initiate DNA replication. Binds histone H3 and H4 trimethylation marks H3K9me3, H3K27me3 and H4K20me3. The chain is Origin recognition complex subunit 3 (ORC3) from Homo sapiens (Human).